A 459-amino-acid chain; its full sequence is Argininosuccinate lyase (459 aa).

This sequence belongs to the lyase 1 family. Argininosuccinate lyase subfamily.

The protein localises to the cytoplasm. The enzyme catalyses 2-(N(omega)-L-arginino)succinate = fumarate + L-arginine. The protein operates within amino-acid biosynthesis; L-arginine biosynthesis; L-arginine from L-ornithine and carbamoyl phosphate: step 3/3. This chain is Argininosuccinate lyase, found in Staphylococcus aureus (strain bovine RF122 / ET3-1).